Consider the following 279-residue polypeptide: Undecaprenyl-diphosphatase (279 aa).

Transmembrane regions (helical) follow at residues 1-21 (MVLEAVLLGIVQGITEFLPIS), 39-59 (GRFFLSSVQLGTSFALILYFF), 96-116 (LLLVTGTIPVVLLGFLLVRFV), 128-148 (FTMGVALIVFGLLLGFADALF), 155-175 (IFQITFIESVLIGAAQIFAII), 201-221 (FSFLLSLPVTFIGGMYGLVAG), 231-251 (YSLIGAIVSFVVGLLVVSALL), and 259-279 (FVLFVYYRVLFGLFLVIVSFF).

The protein belongs to the UppP family.

Its subcellular location is the cell membrane. It carries out the reaction di-trans,octa-cis-undecaprenyl diphosphate + H2O = di-trans,octa-cis-undecaprenyl phosphate + phosphate + H(+). Its function is as follows. Catalyzes the dephosphorylation of undecaprenyl diphosphate (UPP). Confers resistance to bacitracin. The polypeptide is Undecaprenyl-diphosphatase (Tropheryma whipplei (strain TW08/27) (Whipple's bacillus)).